A 451-amino-acid polypeptide reads, in one-letter code: MEKLIAHLKSQGFIFQGSEIYGGLANSWDYGPLGVEVKNKLKQAWWNHFVRKNPYNIGLDSSIILNSSVWKASGHIDGFNDPLIDCKKCNSRWRADKLIEEFNSEINAGVMTENQMEEFIREQNIKCPKCQACDFTQIRKFALMFKTNQGVLEDESSSVYLRPETAQGIFINFKNAQRSLRKKLPFGIGQIGKSFRNEITPGNFIFRTREFEQMELEFFFNPSDEKDWFSYWLNEVETFLQDKIQINKENYRVRSHEKDELAHYSTATSDIEFKFPFGWGELWGVAHRGNFDLNAHQEASKQDLTYLDPTTNQKVLPHVIEPSVGVERMMLAILWQAYHEEDLGEGNSRIVMKLPYNLAPYQIAVMPLQKQQNDQAQALYSNLLNNFDVTYDETGNVGKRYRRQDAIGTPFVITVDFDTPETNSVTVRERDSMEQVRINLDELEAYLKAKF.

The substrate site is built by Arg94 and Glu164. ATP is bound by residues 196 to 198 (RNE), 206 to 211 (FRTREF), 281 to 282 (EL), and 325 to 328 (GVER). 211 to 215 (FEQME) serves as a coordination point for substrate. 321-325 (EPSVG) is a binding site for substrate.

The protein belongs to the class-II aminoacyl-tRNA synthetase family. Homodimer.

Its subcellular location is the cytoplasm. The catalysed reaction is tRNA(Gly) + glycine + ATP = glycyl-tRNA(Gly) + AMP + diphosphate. Functionally, catalyzes the attachment of glycine to tRNA(Gly). This Mesoplasma florum (strain ATCC 33453 / NBRC 100688 / NCTC 11704 / L1) (Acholeplasma florum) protein is Glycine--tRNA ligase.